The chain runs to 497 residues: MNLRSLLASTPTQVLQPQHAALDLAITGLQTDSRRCQPGDLFLGMPGTQVDGGQFWPEAIAAGAVAVIVTPTALAQRPLSANPEACLILSDQMPVTAGAIAAAFYNQPAQTLKLIGVTGTNGKTTTTHLVEHFLNAADTKTALLGTLYNRWPGYSEVAQHTTPFATDLQAQLATAVDAGCQAAVMEVSSHALDQGRVNGCGFDVAVFTNLTQDHLDYHGTMEAYFAAKARLFAPPYLRGKAVINADDAYGQRLITMTPPGQCLTYSVVGTADFCTTDLQYGPTGVEGTIKTPDGAFPFRSPLVGQFNLANLLGAIAAGWTLGLPIETMLAVVPDFVGVPGRMERVVGQDSDPTVIVDYAHTPDSLENLLKAARPFIQGELICVFGCGGDRDRTKRPLMGEIAARLADRVIITSDNPRTEDPRQILADIVAGIPAASPVVVEADRAAAIRQAILSAQPGDGVLLAGKGHEDYQILGTTKIHFDDREQARLALAERQSA.

S33 is a UDP-N-acetyl-alpha-D-muramoyl-L-alanyl-D-glutamate binding site. 119–125 (GTNGKTT) provides a ligand contact to ATP. UDP-N-acetyl-alpha-D-muramoyl-L-alanyl-D-glutamate is bound by residues 161–162 (TT), S188, Q194, and R196. At K228 the chain carries N6-carboxylysine. Meso-2,6-diaminopimelate contacts are provided by residues R390, 414–417 (DNPR), G465, and E469. Positions 414 to 417 (DNPR) match the Meso-diaminopimelate recognition motif motif.

This sequence belongs to the MurCDEF family. MurE subfamily. The cofactor is Mg(2+). In terms of processing, carboxylation is probably crucial for Mg(2+) binding and, consequently, for the gamma-phosphate positioning of ATP.

It localises to the cytoplasm. The enzyme catalyses UDP-N-acetyl-alpha-D-muramoyl-L-alanyl-D-glutamate + meso-2,6-diaminopimelate + ATP = UDP-N-acetyl-alpha-D-muramoyl-L-alanyl-gamma-D-glutamyl-meso-2,6-diaminopimelate + ADP + phosphate + H(+). Its pathway is cell wall biogenesis; peptidoglycan biosynthesis. In terms of biological role, catalyzes the addition of meso-diaminopimelic acid to the nucleotide precursor UDP-N-acetylmuramoyl-L-alanyl-D-glutamate (UMAG) in the biosynthesis of bacterial cell-wall peptidoglycan. The polypeptide is UDP-N-acetylmuramoyl-L-alanyl-D-glutamate--2,6-diaminopimelate ligase (Synechococcus elongatus (strain ATCC 33912 / PCC 7942 / FACHB-805) (Anacystis nidulans R2)).